Reading from the N-terminus, the 160-residue chain is Small ribosomal subunit protein uS7B (160 aa).

It belongs to the universal ribosomal protein uS7 family. As to quaternary structure, part of the 30S ribosomal subunit. Contacts proteins S9 and S11.

Functionally, one of the primary rRNA binding proteins, it binds directly to 16S rRNA where it nucleates assembly of the head domain of the 30S subunit. Is located at the subunit interface close to the decoding center, probably blocks exit of the E-site tRNA. The protein is Small ribosomal subunit protein uS7B of Aquifex aeolicus (strain VF5).